The primary structure comprises 510 residues: 1,3-beta-glucanosyltransferase gas5 (510 aa).

An N-terminal signal peptide occupies residues 1 to 22; it reads MNFLHFLTTSLLLLGGSRLALA. C70 and C99 form a disulfide bridge. Y88 is a (1,3-beta-D-glucosyl)n binding site. Residue N147 is glycosylated (N-linked (GlcNAc...) asparagine). 4 residues coordinate (1,3-beta-D-glucosyl)n: N158, E159, D200, and R205. Residue E159 is the Proton donor of the active site. 2 disulfides stabilise this stretch: C214/C353 and C232/C264. 2 N-linked (GlcNAc...) asparagine glycosylation sites follow: N216 and N252. Catalysis depends on E261, which acts as the Nucleophile. (1,3-beta-D-glucosyl)n is bound at residue Y300. N-linked (GlcNAc...) asparagine glycans are attached at residues N318, N337, and N397. The disordered stretch occupies residues 424-456; sequence QSSTSGSSSGSSSASTTASSSSVSSGSSISSGS. S485 carries GPI-anchor amidated serine lipidation. A propeptide spans 486–510 (removed in mature form); that stretch reads SASTFNLSRFYVFAGILAISGLVFA. The N-linked (GlcNAc...) asparagine glycan is linked to N491.

The protein belongs to the glycosyl hydrolase 72 family. Post-translationally, the GPI-anchor is attached to the protein in the endoplasmic reticulum and serves to target the protein to the cell surface. There, the glucosamine-inositol phospholipid moiety is cleaved off and the GPI-modified mannoprotein is covalently attached via its lipidless GPI glycan remnant to the 1,6-beta-glucan of the outer cell wall layer.

It localises to the secreted. Its subcellular location is the cell wall. It is found in the membrane. Splits internally a 1,3-beta-glucan molecule and transfers the newly generated reducing end (the donor) to the non-reducing end of another 1,3-beta-glucan molecule (the acceptor) forming a 1,3-beta linkage, resulting in the elongation of 1,3-beta-glucan chains in the cell wall. In Schizosaccharomyces pombe (strain 972 / ATCC 24843) (Fission yeast), this protein is 1,3-beta-glucanosyltransferase gas5 (gas5).